A 66-amino-acid polypeptide reads, in one-letter code: KEGYIVNSYTGCKYECFKLGDNDYCLRECRQQYGKGAGGYCYAFGCWCTHLYEQAVVWPLKNKTCN.

An LCN-type CS-alpha/beta domain is found at 1–66 (KEGYIVNSYT…VWPLKNKTCN (66 aa)). Intrachain disulfides connect Cys-12/Cys-65, Cys-16/Cys-41, Cys-25/Cys-46, and Cys-29/Cys-48. At Asn-66 the chain carries Asparagine amide.

Belongs to the long (4 C-C) scorpion toxin superfamily. Sodium channel inhibitor family. Beta subfamily. In terms of tissue distribution, expressed by the venom gland.

Its subcellular location is the secreted. Beta toxins bind voltage-independently at site-4 of sodium channels (Nav) and shift the voltage of activation toward more negative potentials thereby affecting sodium channel activation and promoting spontaneous and repetitive firing. This chain is Beta-toxin Chui2, found in Centruroides huichol (Scorpion).